The primary structure comprises 118 residues: Large ribosomal subunit protein bL19 (118 aa).

The protein belongs to the bacterial ribosomal protein bL19 family.

This protein is located at the 30S-50S ribosomal subunit interface and may play a role in the structure and function of the aminoacyl-tRNA binding site. In Buchnera aphidicola subsp. Baizongia pistaciae (strain Bp), this protein is Large ribosomal subunit protein bL19.